The sequence spans 332 residues: Ribosomal RNA small subunit methyltransferase H (332 aa).

S-adenosyl-L-methionine-binding positions include 39-41 (GGY), D56, F83, D100, and Q107.

This sequence belongs to the methyltransferase superfamily. RsmH family.

It is found in the cytoplasm. The catalysed reaction is cytidine(1402) in 16S rRNA + S-adenosyl-L-methionine = N(4)-methylcytidine(1402) in 16S rRNA + S-adenosyl-L-homocysteine + H(+). Specifically methylates the N4 position of cytidine in position 1402 (C1402) of 16S rRNA. The chain is Ribosomal RNA small subunit methyltransferase H from Bartonella tribocorum (strain CIP 105476 / IBS 506).